We begin with the raw amino-acid sequence, 259 residues long: tRNA (guanine-N(1)-)-methyltransferase (259 aa).

S-adenosyl-L-methionine is bound by residues Gly-113 and 133-138 (IGDYVL).

The protein belongs to the RNA methyltransferase TrmD family. In terms of assembly, homodimer.

Its subcellular location is the cytoplasm. The catalysed reaction is guanosine(37) in tRNA + S-adenosyl-L-methionine = N(1)-methylguanosine(37) in tRNA + S-adenosyl-L-homocysteine + H(+). Functionally, specifically methylates guanosine-37 in various tRNAs. In Xanthomonas oryzae pv. oryzae (strain MAFF 311018), this protein is tRNA (guanine-N(1)-)-methyltransferase.